The primary structure comprises 376 residues: Chaperone protein DnaJ (376 aa).

One can recognise a J domain in the interval 5-70 (DYYEILGVSK…QKRAAYDQYG (66 aa)). A CR-type zinc finger spans residues 131 to 209 (GVTKEIRIPT…CHGHGRVERS (79 aa)). Zn(2+)-binding residues include Cys144, Cys147, Cys161, Cys164, Cys183, Cys186, Cys197, and Cys200. CXXCXGXG motif repeat units follow at residues 144-151 (CDVCHGSG), 161-168 (CPTCHGSG), 183-190 (CPHCQGRG), and 197-204 (CNKCHGHG).

This sequence belongs to the DnaJ family. As to quaternary structure, homodimer. Zn(2+) is required as a cofactor.

It is found in the cytoplasm. Participates actively in the response to hyperosmotic and heat shock by preventing the aggregation of stress-denatured proteins and by disaggregating proteins, also in an autonomous, DnaK-independent fashion. Unfolded proteins bind initially to DnaJ; upon interaction with the DnaJ-bound protein, DnaK hydrolyzes its bound ATP, resulting in the formation of a stable complex. GrpE releases ADP from DnaK; ATP binding to DnaK triggers the release of the substrate protein, thus completing the reaction cycle. Several rounds of ATP-dependent interactions between DnaJ, DnaK and GrpE are required for fully efficient folding. Also involved, together with DnaK and GrpE, in the DNA replication of plasmids through activation of initiation proteins. The chain is Chaperone protein DnaJ from Shigella dysenteriae serotype 1 (strain Sd197).